The sequence spans 317 residues: MTTALDQLKQYTTVVADTGDFQQLAQYKPQDATTNPSLILKAVQKDAYRPILEKTVRDHAGESAGFIIDRLLIAFGTEILKLIPGRVSTEVDARLSFDTQRSIDKGREIIKLYEAAGVGRERVLIKLASTWEGIRAAEVLQREGIRCNMTLLFSLVQAAACAEAGAQLISPFVGRIYDWYKKQKGADWDEAQDGGANDPGVQSVRRIYTYYKHFGYRTEVMGASFRTTSQITELAGCDLLTISPELLQKLHDSTEAVARKLSPDEARDARLERVAIDESSFRFQLNDDAMATEKLAEGIRLFSADAVKLEKMIEALR.

The Schiff-base intermediate with substrate role is filled by K126.

Belongs to the transaldolase family. Type 1 subfamily. In terms of assembly, homodimer.

It localises to the cytoplasm. It carries out the reaction D-sedoheptulose 7-phosphate + D-glyceraldehyde 3-phosphate = D-erythrose 4-phosphate + beta-D-fructose 6-phosphate. The protein operates within carbohydrate degradation; pentose phosphate pathway; D-glyceraldehyde 3-phosphate and beta-D-fructose 6-phosphate from D-ribose 5-phosphate and D-xylulose 5-phosphate (non-oxidative stage): step 2/3. Functionally, transaldolase is important for the balance of metabolites in the pentose-phosphate pathway. The polypeptide is Transaldolase (Burkholderia pseudomallei (strain 1710b)).